Consider the following 222-residue polypeptide: Endonuclease V (222 aa).

Asp-34 and Asp-102 together coordinate Mg(2+).

It belongs to the endonuclease V family. Mg(2+) is required as a cofactor.

The protein localises to the cytoplasm. The enzyme catalyses Endonucleolytic cleavage at apurinic or apyrimidinic sites to products with a 5'-phosphate.. DNA repair enzyme involved in the repair of deaminated bases. Selectively cleaves double-stranded DNA at the second phosphodiester bond 3' to a deoxyinosine leaving behind the intact lesion on the nicked DNA. The sequence is that of Endonuclease V from Proteus mirabilis (strain HI4320).